A 201-amino-acid chain; its full sequence is Small ribosomal subunit protein uS4c (201 aa).

The S4 RNA-binding domain occupies 89-150 (MRLDNILFRL…KQRSKVLIQN (62 aa)).

It belongs to the universal ribosomal protein uS4 family. As to quaternary structure, part of the 30S ribosomal subunit. Contacts protein S5. The interaction surface between S4 and S5 is involved in control of translational fidelity.

Its subcellular location is the plastid. The protein resides in the chloroplast. Functionally, one of the primary rRNA binding proteins, it binds directly to 16S rRNA where it nucleates assembly of the body of the 30S subunit. Its function is as follows. With S5 and S12 plays an important role in translational accuracy. The protein is Small ribosomal subunit protein uS4c (rps4) of Acorus calamus (Sweet flag).